Here is a 245-residue protein sequence, read N- to C-terminus: 1-(5-phosphoribosyl)-5-[(5-phosphoribosylamino)methylideneamino] imidazole-4-carboxamide isomerase (245 aa).

The active-site Proton acceptor is the Asp-7. Catalysis depends on Asp-129, which acts as the Proton donor.

This sequence belongs to the HisA/HisF family.

The protein localises to the cytoplasm. It catalyses the reaction 1-(5-phospho-beta-D-ribosyl)-5-[(5-phospho-beta-D-ribosylamino)methylideneamino]imidazole-4-carboxamide = 5-[(5-phospho-1-deoxy-D-ribulos-1-ylimino)methylamino]-1-(5-phospho-beta-D-ribosyl)imidazole-4-carboxamide. It functions in the pathway amino-acid biosynthesis; L-histidine biosynthesis; L-histidine from 5-phospho-alpha-D-ribose 1-diphosphate: step 4/9. This chain is 1-(5-phosphoribosyl)-5-[(5-phosphoribosylamino)methylideneamino] imidazole-4-carboxamide isomerase, found in Shewanella oneidensis (strain ATCC 700550 / JCM 31522 / CIP 106686 / LMG 19005 / NCIMB 14063 / MR-1).